Here is a 126-residue protein sequence, read N- to C-terminus: Glycine cleavage system H protein (126 aa).

One can recognise a Lipoyl-binding domain in the interval 24–105 (TLTVGITDHA…AYGVWLFKIK (82 aa)). Residue lysine 65 is modified to N6-lipoyllysine.

It belongs to the GcvH family. In terms of assembly, the glycine cleavage system is composed of four proteins: P, T, L and H. The cofactor is (R)-lipoate.

Its function is as follows. The glycine cleavage system catalyzes the degradation of glycine. The H protein shuttles the methylamine group of glycine from the P protein to the T protein. The chain is Glycine cleavage system H protein from Burkholderia cenocepacia (strain ATCC BAA-245 / DSM 16553 / LMG 16656 / NCTC 13227 / J2315 / CF5610) (Burkholderia cepacia (strain J2315)).